An 80-amino-acid chain; its full sequence is Conotoxin ArMKLT2-0321 (80 aa).

Residues 1–21 form the signal peptide; it reads MKLTCVLIIAMLFLIVCQLNT. A propeptide spanning residues 22–48 is cleaved from the precursor; the sequence is ADDSTDKQEYRAVKLRDAMRNFKGSKR. Disulfide bonds link cysteine 50–cysteine 63, cysteine 57–cysteine 68, and cysteine 62–cysteine 77.

It belongs to the conotoxin O1 superfamily. As to expression, expressed by the venom duct.

The protein localises to the secreted. This Conus arenatus (Sand-dusted cone) protein is Conotoxin ArMKLT2-0321.